A 963-amino-acid chain; its full sequence is Exportin-T (963 aa).

Residue Met1 is modified to N-acetylmethionine. Lys635 is subject to N6-acetyllysine.

Belongs to the exportin family. In terms of assembly, found in a complex with XPOT, Ran and tRNA. Probably found in a complex with nucleoporins. Interacts with Ran and tRNA in a GTP-dependent manner.

The protein localises to the nucleus. It localises to the cytoplasm. In terms of biological role, mediates the nuclear export of aminoacylated tRNAs. In the nucleus binds to tRNA and to the GTPase Ran in its active GTP-bound form. Docking of this trimeric complex to the nuclear pore complex (NPC) is mediated through binding to nucleoporins. Upon transit of a nuclear export complex into the cytoplasm, disassembling of the complex and hydrolysis of Ran-GTP to Ran-GDP (induced by RANBP1 and RANGAP1, respectively) cause release of the tRNA from the export receptor. XPOT then return to the nuclear compartment and mediate another round of transport. The directionality of nuclear export is thought to be conferred by an asymmetric distribution of the GTP- and GDP-bound forms of Ran between the cytoplasm and nucleus. This is Exportin-T (Xpot) from Mus musculus (Mouse).